A 240-amino-acid chain; its full sequence is CD302 antigen (240 aa).

The 121-residue stretch at 40–160 (FQDSCYIFLQ…CEVSSVEGTL (121 aa)) folds into the C-type lectin domain. Residue N117 is glycosylated (N-linked (GlcNAc...) asparagine). A disulfide bridge connects residues C136 and C151. Residues 177–197 (ILISALVIASTVILTVLGAVI) traverse the membrane as a helical segment. Residues 198–240 (WFLYKRNLDSGFTTVFSTAPQSPFNDDCVLVVAEENEYAVQFD) are Cytoplasmic-facing.

It is found in the membrane. Its subcellular location is the cell projection. It localises to the filopodium. The protein resides in the cytoplasm. The protein localises to the cell cortex. Potential multifunctional C-type lectin receptor that may play roles in endocytosis and phagocytosis as well as in cell adhesion and migration. This Sus scrofa (Pig) protein is CD302 antigen.